Reading from the N-terminus, the 149-residue chain is Arginine repressor (149 aa).

The protein belongs to the ArgR family.

The protein resides in the cytoplasm. It functions in the pathway amino-acid biosynthesis; L-arginine biosynthesis [regulation]. In terms of biological role, regulates arginine biosynthesis genes. This is Arginine repressor from Halalkalibacterium halodurans (strain ATCC BAA-125 / DSM 18197 / FERM 7344 / JCM 9153 / C-125) (Bacillus halodurans).